Consider the following 349-residue polypeptide: Glycerol-3-phosphate dehydrogenase [NAD(+)], cytoplasmic (349 aa).

10-15 (GSGNWG) provides a ligand contact to NAD(+). K120 lines the substrate pocket. A153 serves as a coordination point for NAD(+). Position 154 is a phosphoserine (S154). Residue K204 is the Proton acceptor of the active site. Residue R269 coordinates NAD(+). Position 269–270 (269–270 (RN)) interacts with substrate. The residue at position 289 (K289) is an N6-succinyllysine. NAD(+)-binding residues include K296 and Q298. Phosphotyrosine is present on Y326.

This sequence belongs to the NAD-dependent glycerol-3-phosphate dehydrogenase family. Homodimer.

It localises to the cytoplasm. The catalysed reaction is sn-glycerol 3-phosphate + NAD(+) = dihydroxyacetone phosphate + NADH + H(+). Its function is as follows. Has glycerol-3-phosphate dehydrogenase activity. This Rattus norvegicus (Rat) protein is Glycerol-3-phosphate dehydrogenase [NAD(+)], cytoplasmic.